Here is a 185-residue protein sequence, read N- to C-terminus: Elongation factor P 1 (185 aa).

It belongs to the elongation factor P family.

The protein resides in the cytoplasm. The protein operates within protein biosynthesis; polypeptide chain elongation. Functionally, involved in peptide bond synthesis. Stimulates efficient translation and peptide-bond synthesis on native or reconstituted 70S ribosomes in vitro. Probably functions indirectly by altering the affinity of the ribosome for aminoacyl-tRNA, thus increasing their reactivity as acceptors for peptidyl transferase. In Chlamydia muridarum (strain MoPn / Nigg), this protein is Elongation factor P 1 (efp1).